Here is a 570-residue protein sequence, read N- to C-terminus: GDP-Man:Man(3)GlcNAc(2)-PP-Dol alpha-1,2-mannosyltransferase (570 aa).

The Lumenal portion of the chain corresponds to 1–7 (MKLADFV). A helical membrane pass occupies residues 8-70 (TYVFGSLLAG…DFGWKNSSVR (63 aa)). The Cytoplasmic segment spans residues 71-200 (RAFILASERP…RLVESKSWPK (130 aa)). The helical intramembrane region spans 201-221 (FTLLGQAYGSIILSIEALTTL). At 222 to 446 (APDYWIDTMG…FGINAMWNEH (225 aa)) the chain is on the cytoplasmic side. Positions 447 to 467 (FGIAVVEYMASGLIPLCHASA) form an intramembrane region, helical. The Cytoplasmic portion of the chain corresponds to 468-570 (GPLYDIVVPW…LNLTHNRMFS (103 aa)).

The protein belongs to the glycosyltransferase group 1 family.

The protein localises to the endoplasmic reticulum membrane. The catalysed reaction is an alpha-D-Man-(1-&gt;3)-[alpha-D-Man-(1-&gt;6)]-beta-D-Man-(1-&gt;4)-beta-D-GlcNAc-(1-&gt;4)-alpha-D-GlcNAc-diphospho-di-trans,poly-cis-dolichol + 2 GDP-alpha-D-mannose = an alpha-D-Man-(1-&gt;2)-alpha-D-Man-(1-&gt;2)-alpha-D-Man-(1-&gt;3)-[alpha-D-Man-(1-&gt;6)]-beta-D-Man-(1-&gt;4)-beta-D-GlcNAc-(1-&gt;4)-alpha-D-GlcNAc-diphospho-di-trans,poly-cis-dolichol + 2 GDP + 2 H(+). Its pathway is protein modification; protein glycosylation. Its function is as follows. GDP-Man:Man(3)GlcNAc(2)-PP-Dol alpha-1,2-mannosyltransferase that operates in the biosynthetic pathway of dolichol-linked oligosaccharides, the glycan precursors employed in protein asparagine (N)-glycosylation. The assembly of dolichol-linked oligosaccharides begins on the cytosolic side of the endoplasmic reticulum membrane and finishes in its lumen. The sequential addition of sugars to dolichol pyrophosphate produces dolichol-linked oligosaccharides containing fourteen sugars, including two GlcNAcs, nine mannoses and three glucoses. Once assembled, the oligosaccharide is transferred from the lipid to nascent proteins by oligosaccharyltransferases. Catalyzes, on the cytoplasmic face of the endoplasmic reticulum, the addition of the fourth and fifth mannose residues to the dolichol-linked oligosaccharide chain, to produce Man(5)GlcNAc(2)-PP-dolichol core oligosaccharide. The sequence is that of GDP-Man:Man(3)GlcNAc(2)-PP-Dol alpha-1,2-mannosyltransferase (ALG11) from Kluyveromyces lactis (strain ATCC 8585 / CBS 2359 / DSM 70799 / NBRC 1267 / NRRL Y-1140 / WM37) (Yeast).